We begin with the raw amino-acid sequence, 454 residues long: Enolase (454 aa).

Gln167 lines the (2R)-2-phosphoglycerate pocket. The active-site Proton donor is Glu209. 3 residues coordinate Mg(2+): Asp250, Glu312, and Asp339. Residues Lys364, Arg393, Ser394, and Lys415 each coordinate (2R)-2-phosphoglycerate. Lys364 acts as the Proton acceptor in catalysis.

The protein belongs to the enolase family. Requires Mg(2+) as cofactor.

It is found in the cytoplasm. Its subcellular location is the secreted. The protein localises to the cell surface. It carries out the reaction (2R)-2-phosphoglycerate = phosphoenolpyruvate + H2O. Its pathway is carbohydrate degradation; glycolysis; pyruvate from D-glyceraldehyde 3-phosphate: step 4/5. In terms of biological role, catalyzes the reversible conversion of 2-phosphoglycerate (2-PG) into phosphoenolpyruvate (PEP). It is essential for the degradation of carbohydrates via glycolysis. This Mycoplasmopsis agalactiae (strain NCTC 10123 / CIP 59.7 / PG2) (Mycoplasma agalactiae) protein is Enolase.